The following is a 172-amino-acid chain: NADH-quinone oxidoreductase subunit B (172 aa).

Cys46, Cys47, Cys111, and Cys141 together coordinate [4Fe-4S] cluster.

Belongs to the complex I 20 kDa subunit family. NDH-1 is composed of 14 different subunits. Subunits NuoB, C, D, E, F, and G constitute the peripheral sector of the complex. The cofactor is [4Fe-4S] cluster.

It localises to the cell membrane. The enzyme catalyses a quinone + NADH + 5 H(+)(in) = a quinol + NAD(+) + 4 H(+)(out). Its function is as follows. NDH-1 shuttles electrons from NADH, via FMN and iron-sulfur (Fe-S) centers, to quinones in the respiratory chain. The immediate electron acceptor for the enzyme in this species is believed to be a menaquinone. Couples the redox reaction to proton translocation (for every two electrons transferred, four hydrogen ions are translocated across the cytoplasmic membrane), and thus conserves the redox energy in a proton gradient. The sequence is that of NADH-quinone oxidoreductase subunit B from Brevibacillus brevis (strain 47 / JCM 6285 / NBRC 100599).